Here is a 135-residue protein sequence, read N- to C-terminus: Protein E6 (135 aa).

Zinc fingers lie at residues 11 to 47 (CIWC…CTSC) and 83 to 119 (CMYC…CYLC).

This sequence belongs to the papillomaviridae E6 protein family. In terms of assembly, forms homodimers. Interacts with ubiquitin-protein ligase UBE3A/E6-AP; this interaction stimulates UBE3A ubiquitin activity. Interacts with host BAK1.

It localises to the host cytoplasm. It is found in the host nucleus. Functionally, plays a major role in the induction and maintenance of cellular transformation. E6 associates with host UBE3A/E6-AP ubiquitin-protein ligase and modulates its activity. Protects host keratinocytes from apoptosis by mediating the degradation of host BAK1. May also inhibit host immune response. This is Protein E6 from Cervus elaphus (Red deer).